The primary structure comprises 932 residues: Protein hir1 (932 aa).

WD repeat units follow at residues 16-55 (GHRLSIFSIHIHPDGSRIATGGLDGTIRIWSTEAINRENE), 72-111 (THTGTVTSVRFSPNGQYLASGSDDRVVIIWHKEEAIPGLG), 132-171 (GHDNDIQDLCWSYDSQLVVSVGLDSSIIVWNGTTFERLKR), 174-213 (AHQSHVKGITFDPAGKYFATESDDRTIKVWRVSDFSIEKT), 222-265 (PLST…SEIN), 268-316 (GHEG…PLLS), and 320-361 (VFQK…DMVS). 2 stretches are compositionally biased toward polar residues: residues 405–426 (STTDPTLVPQSSSTPKSAQKTP) and 441–453 (TVDTNKLTASKEQ). Disordered regions lie at residues 405–470 (STTD…NEIP) and 498–520 (TPSTSRLASTQLQHTGSSQLPPQ). Residues 498 to 507 (TPSTSRLAST) show a composition bias toward low complexity.

The protein belongs to the WD repeat HIR1 family. Interacts with his3 and slm9.

It is found in the cytoplasm. Its subcellular location is the nucleus. Functionally, probably required for replication-independent chromatin assembly. Required for transcriptional silencing in the outer repeat (otr) centromeric repeats and the Tf2 long terminal repeat retrotransposons. Repressor of histone gene transcription in G1 arrested cells. Required for repression of htb1 gene expression outside of S phase. The chain is Protein hir1 (hip1) from Schizosaccharomyces pombe (strain 972 / ATCC 24843) (Fission yeast).